The following is a 521-amino-acid chain: UDP-N-acetylmuramoyl-L-alanyl-D-glutamate--2,6-diaminopimelate ligase (521 aa).

Position 33 (Ser-33) interacts with UDP-N-acetyl-alpha-D-muramoyl-L-alanyl-D-glutamate. Residue 116-122 (GTNGKTT) coordinates ATP. Residues 158 to 159 (TT), Ser-185, Gln-191, and Arg-193 contribute to the UDP-N-acetyl-alpha-D-muramoyl-L-alanyl-D-glutamate site. N6-carboxylysine is present on Lys-225. Meso-2,6-diaminopimelate-binding positions include Arg-409, 433-436 (DNPR), Gly-483, and Glu-487. Residues 433-436 (DNPR) carry the Meso-diaminopimelate recognition motif motif.

Belongs to the MurCDEF family. MurE subfamily. It depends on Mg(2+) as a cofactor. In terms of processing, carboxylation is probably crucial for Mg(2+) binding and, consequently, for the gamma-phosphate positioning of ATP.

The protein localises to the cytoplasm. It catalyses the reaction UDP-N-acetyl-alpha-D-muramoyl-L-alanyl-D-glutamate + meso-2,6-diaminopimelate + ATP = UDP-N-acetyl-alpha-D-muramoyl-L-alanyl-gamma-D-glutamyl-meso-2,6-diaminopimelate + ADP + phosphate + H(+). It functions in the pathway cell wall biogenesis; peptidoglycan biosynthesis. Its function is as follows. Catalyzes the addition of meso-diaminopimelic acid to the nucleotide precursor UDP-N-acetylmuramoyl-L-alanyl-D-glutamate (UMAG) in the biosynthesis of bacterial cell-wall peptidoglycan. This chain is UDP-N-acetylmuramoyl-L-alanyl-D-glutamate--2,6-diaminopimelate ligase, found in Nitrosomonas europaea (strain ATCC 19718 / CIP 103999 / KCTC 2705 / NBRC 14298).